The chain runs to 396 residues: MAKAKFERTKAHVNIGTIGHVDHGKTTLTAAISKVLYDKYPDLNEARDFATIDSAPEERQRGITINISHVEYQTEKRHYAHVDAPGHADYIKNMITGAAQMDGAILVVAATDGPMAQTREHVLLARQVGVPALLVALNKSDMVEDEELLERVEMEVRQLLSSRSFDVDEAPVIRTSALKALEGDPQWVKSVEDLMDAVDEYIPDPVRDKDKPFLMPIEDVFTITGRGTVVTGRAERGTLKINSEVEIVGIRDVQKTTVTGIEMFHKQLDEAWAGENCGLLVRGLKRDDVERGQVLVEPGSITPHTNFEANVYILSKDEGGRHTPFYSNYRAQFYFRTTDVTGVITLPEGTEMVMPGDTTEMSVELIQPIAMEEGLGFAIREGGRTVGSGRVTKITK.

The tr-type G domain maps to 10 to 206; that stretch reads KAHVNIGTIG…AVDEYIPDPV (197 aa). The tract at residues 19–26 is G1; that stretch reads GHVDHGKT. 19 to 26 is a binding site for GTP; the sequence is GHVDHGKT. T26 provides a ligand contact to Mg(2+). Residues 62–66 are G2; the sequence is GITIN. The G3 stretch occupies residues 83-86; that stretch reads DAPG. GTP is bound by residues 83–87 and 138–141; these read DAPGH and NKSD. Positions 138-141 are G4; sequence NKSD. Residues 176–178 form a G5 region; that stretch reads SAL.

Belongs to the TRAFAC class translation factor GTPase superfamily. Classic translation factor GTPase family. EF-Tu/EF-1A subfamily. As to quaternary structure, monomer.

The protein resides in the cytoplasm. The enzyme catalyses GTP + H2O = GDP + phosphate + H(+). Its function is as follows. GTP hydrolase that promotes the GTP-dependent binding of aminoacyl-tRNA to the A-site of ribosomes during protein biosynthesis. This chain is Elongation factor Tu, found in Micrococcus luteus (Micrococcus lysodeikticus).